Here is a 170-residue protein sequence, read N- to C-terminus: dCTP pyrophosphatase 1 (170 aa).

Residues 1 to 25 are disordered; it reads MSTAGDGERGTVGQEDSAAARPFRF. Ser-2 carries the N-acetylserine modification. Ser-2 is modified (phosphoserine). Residues His-38 and 47-51 contribute to the substrate site; that span reads WEQFH. Mg(2+) is bound by residues Glu-63 and Glu-66. Position 73 (Trp-73) interacts with substrate. The Mg(2+) site is built by Glu-95 and Asp-98. Residue Tyr-102 coordinates substrate. The interval 150–170 is disordered; the sequence is SENQAVGAGDPASELRDQAST.

In terms of assembly, homotetramer. Requires Mg(2+) as cofactor. Ubiquitous. Highly expressed in heart, liver, skeletal muscle, cerebellum, brain, and salivary gland.

The protein localises to the cytoplasm. Its subcellular location is the cytosol. The catalysed reaction is dCTP + H2O = dCMP + diphosphate + H(+). Inhibited by divalent calcium or cadmium ions. Its function is as follows. Hydrolyzes deoxynucleoside triphosphates (dNTPs) to the corresponding nucleoside monophosphates. Has a strong preference for dCTP and its analogs including 5-iodo-dCTP and 5-methyl-dCTP for which it may even have a higher efficiency. May protect DNA or RNA against the incorporation of these genotoxic nucleotide analogs through their catabolism. The sequence is that of dCTP pyrophosphatase 1 from Mus musculus (Mouse).